The sequence spans 316 residues: Methionyl-tRNA formyltransferase (316 aa).

114 to 117 lines the (6S)-5,6,7,8-tetrahydrofolate pocket; the sequence is SLLP.

Belongs to the Fmt family.

The enzyme catalyses L-methionyl-tRNA(fMet) + (6R)-10-formyltetrahydrofolate = N-formyl-L-methionyl-tRNA(fMet) + (6S)-5,6,7,8-tetrahydrofolate + H(+). Attaches a formyl group to the free amino group of methionyl-tRNA(fMet). The formyl group appears to play a dual role in the initiator identity of N-formylmethionyl-tRNA by promoting its recognition by IF2 and preventing the misappropriation of this tRNA by the elongation apparatus. The chain is Methionyl-tRNA formyltransferase from Aromatoleum aromaticum (strain DSM 19018 / LMG 30748 / EbN1) (Azoarcus sp. (strain EbN1)).